A 184-amino-acid polypeptide reads, in one-letter code: Non-specific lipid transfer protein GPI-anchored 6 (184 aa).

The first 24 residues, 1–24, serve as a signal peptide directing secretion; sequence MEKSTRTLFITIVITSMLLGFGNS. 4 disulfides stabilise this stretch: Cys-33/Cys-74, Cys-43/Cys-58, Cys-59/Cys-101, and Cys-72/Cys-111. A disordered region spans residues 138–158; sequence NSTSPTQIHKDGTGGGKAEPV. A lipid anchor (GPI-anchor amidated serine) is attached at Ser-160. Positions 161 to 184 are cleaved as a propeptide — removed in mature form; the sequence is NGWKEKSWLGVELLIYLLVSLIFF.

The protein belongs to the plant LTP family. In terms of tissue distribution, preferentially expressed in the shoot apical meristem and the root meristem. Also present in the ovules and developing embryos. Observed in cotyledons, hypocotyls, flowers, leaves and siliques. Up-regulated in the epidermis of stems.

Its subcellular location is the cell membrane. Lipid transfer protein involved in seed and ovule maturation and development, probably by regulating the fatty acids homeostasis during suberin and sporopollenin biosynthesis or deposition. Contributes to pre-invasive defense against some non-host powdery mildew pathogens by preventing the penetration of the epidermal cell wall by the fungal agents (e.g. Blumeria graminis f. sp. hordei (Bgh)). This chain is Non-specific lipid transfer protein GPI-anchored 6, found in Arabidopsis thaliana (Mouse-ear cress).